The primary structure comprises 457 residues: Fibrinogen C domain-containing protein 1-B (457 aa).

A disordered region spans residues Met1–Glu21. Residues Met1–Cys33 are Cytoplasmic-facing. A helical; Signal-anchor for type II membrane protein membrane pass occupies residues Thr34 to Met54. Topologically, residues Asn55–Asn457 are extracellular. The region spanning Cys231–Arg454 is the Fibrinogen C-terminal domain. An N-linked (GlcNAc...) asparagine glycan is attached at Asn233. A disulfide bridge connects residues Cys240 and Cys269. Asn336 is a glycosylation site (N-linked (GlcNAc...) asparagine). Residues Asp389 and Asp391 each contribute to the Ca(2+) site. Cysteines 397 and 410 form a disulfide.

Homotetramer; disulfide-linked.

The protein localises to the membrane. Acetyl group-binding receptor which shows a calcium-dependent binding to acetylated structures such as chitin, some N-acetylated carbohydrates, and amino acids. This Xenopus laevis (African clawed frog) protein is Fibrinogen C domain-containing protein 1-B (fibcd1-b).